Here is a 461-residue protein sequence, read N- to C-terminus: Argininosuccinate lyase (461 aa).

It belongs to the lyase 1 family. Argininosuccinate lyase subfamily.

It is found in the cytoplasm. The enzyme catalyses 2-(N(omega)-L-arginino)succinate = fumarate + L-arginine. The protein operates within amino-acid biosynthesis; L-arginine biosynthesis; L-arginine from L-ornithine and carbamoyl phosphate: step 3/3. The polypeptide is Argininosuccinate lyase (Dehalococcoides mccartyi (strain CBDB1)).